Consider the following 2131-residue polypeptide: Sodium channel protein para (2131 aa).

Residues 1-148 are Cytoplasmic-facing; the sequence is MTEDSDSISE…FNPIRRVAIY (148 aa). Residues 35–48 are compositionally biased toward basic and acidic residues; it reads HEKQKELERKRAEG. A disordered region spans residues 35–84; the sequence is HEKQKELERKRAEGEVPQYGRKKKQKEIRYDDEDEDEGPQPDPTLEQGVP. Over residues 64–73 the composition is skewed to acidic residues; that stretch reads YDDEDEDEGP. One copy of the I repeat lies at 134 to 467; sequence WMLDPFNPIR…AAKAAKLEER (334 aa). The chain crosses the membrane as a helical span at residues 149–172; sequence ILVHPLFSLFIITTILVNCILMIM. The Extracellular portion of the chain corresponds to 173 to 180; it reads PTTPTVES. The helical transmembrane segment at 181 to 199 threads the bilayer; the sequence is TEVIFTGIYTFESAVKVMA. The Cytoplasmic segment spans residues 200 to 212; the sequence is RGFILCPFTYLRD. Residues 213–231 form a helical membrane-spanning segment; sequence AWNWLDFVVIALAYVTMGI. The Extracellular segment spans residues 232–237; that stretch reads DLGNLA. A helical; Voltage-sensor membrane pass occupies residues 238–257; sequence ALRTFRVLRALKTVAIVPGL. The Cytoplasmic portion of the chain corresponds to 258–273; sequence KTIVGAVIESVKNLRD. The helical transmembrane segment at 274-297 threads the bilayer; the sequence is VIILTMFSLSVFALMGLQIYMGVL. The Extracellular segment spans residues 298–373; that stretch reads TQKCIKKFPL…PNYGYTSFDS (76 aa). C301 and C350 are oxidised to a cystine. N313, N325, and N343 each carry an N-linked (GlcNAc...) asparagine glycan. An intramembrane region (pore-forming) is located at residues 374 to 398; the sequence is FGWAFLSAFRLMTQDFWEDLYQLVL. Residues 399-405 are Extracellular-facing; sequence RAAGPWH. Residues 406–427 traverse the membrane as a helical segment; the sequence is MLFFIVIIFLGSFYLVNLILAI. Topologically, residues 428 to 812 are cytoplasmic; it reads VAMSYDELQK…VWLKFQEWVS (385 aa). A phosphoserine; by PKA mark is found at S553 and S570. Disordered stretches follow at residues 553-572 and 671-691; these read STTS…GSRS and KESK…TNGG. The span at 680 to 691 shows a compositional bias: polar residues; the sequence is TRNQSVGATNGG. The stretch at 799-1069 is one II repeat; that stretch reads DCCWVWLKFQ…IAEAFNRIGR (271 aa). A helical membrane pass occupies residues 813–837; that stretch reads LIVFDPFVELFITLCIVVNTMFMAM. Residues 838–848 are Extracellular-facing; it reads DHHDMNKEMER. A helical membrane pass occupies residues 849–873; the sequence is VLKSGNYFFTATFAIEATMKLMAMS. Residues 874–880 lie on the Cytoplasmic side of the membrane; the sequence is PKYYFQE. A helical membrane pass occupies residues 881-900; the sequence is GWNIFDFIIVALSLLELGLE. The Extracellular segment spans residues 901-906; sequence GVQGLS. A helical; Voltage-sensor transmembrane segment spans residues 907–926; it reads VLRSFRLLRVFKLAKSWPTL. The Cytoplasmic portion of the chain corresponds to 927 to 941; it reads NLLISIMGRTMGALG. Residues 942 to 963 traverse the membrane as a helical segment; it reads NLTFVLCIIIFIFAVMGMQLFG. Residues 964 to 985 are Extracellular-facing; it reads KNYHDHKDRFPDGDLPRWNFTD. N-linked (GlcNAc...) asparagine glycosylation is present at N982. The pore-forming intramembrane region spans 986–1006; sequence FMHSFMIVFRVLCGEWIESMW. At 1007–1013 the chain is on the extracellular side; that stretch reads DCMYVGD. A disulfide bond links C1008 and C1016. Residues 1014 to 1041 traverse the membrane as a helical segment; that stretch reads VSCIPFFLATVVIGNLVVLNLFLALLLS. Residues 1042–1296 are Cytoplasmic-facing; it reads NFGSSSLSAP…WGNLRLKTFQ (255 aa). The interval 1166 to 1240 is disordered; that stretch reads DMKNNKPKKS…LDEEGECEEG (75 aa). Positions 1177-1194 are enriched in polar residues; that stretch reads YLNNATDDDTASINSYGS. Over residues 1199 to 1225 the composition is skewed to basic and acidic residues; it reads PFKDESHKGSAETMEGEEKRDASKEDL. Over residues 1226–1240 the composition is skewed to acidic residues; it reads GLDEELDEEGECEEG. The stretch at 1284-1591 is one III repeat; the sequence is WQGWGNLRLK…QKKYYNAMKK (308 aa). The chain crosses the membrane as a helical span at residues 1297-1320; that stretch reads LIENKYFETAVITMILMSSLALAL. The Extracellular segment spans residues 1321-1334; the sequence is EDVHLPQRPILQDI. A helical transmembrane segment spans residues 1335–1359; that stretch reads LYYMDRIFTVIFFLEMLIKWLALGF. At 1360–1365 the chain is on the cytoplasmic side; that stretch reads KVYFTN. Residues 1366 to 1387 form a helical membrane-spanning segment; sequence AWCWLDFVIVMVSLINFVASLV. Topologically, residues 1388 to 1391 are extracellular; it reads GAGG. The chain crosses the membrane as a helical; Voltage-sensor span at residues 1392-1413; that stretch reads IQAFKTMRTLRALRPLRAMSRM. Over 1414–1432 the chain is Cytoplasmic; it reads QGMRVVVNALVQAIPSIFN. The chain crosses the membrane as a helical span at residues 1433–1454; it reads VLLVCLIFWLIFAIMGVQLFAG. Residues 1455–1495 are Extracellular-facing; the sequence is KYFKCEDMNGTKLSHEIIPNRNACESENYTWVNSAMNFDHV. N1463 and N1482 each carry an N-linked (GlcNAc...) asparagine glycan. The segment at residues 1496–1517 is an intramembrane region (pore-forming); the sequence is GNAYLCLFQVATFKGWIQIMND. The Extracellular portion of the chain corresponds to 1518–1533; that stretch reads AIDSREVDKQPIRETN. Residues 1534-1560 form a helical membrane-spanning segment; sequence IYMYLYFVFFIIFGSFFTLNLFIGVII. At 1561 to 1614 the chain is on the cytoplasmic side; it reads DNFNEQKKKAGGSLEMFMTEDQKKYYNAMKKMGSKKPLKAIPRPRWRPQAIVFE. One copy of the IV repeat lies at 1601 to 1862; it reads IPRPRWRPQA…NMYIAVILEN (262 aa). A helical transmembrane segment spans residues 1615–1638; it reads IVTDKKFDIIIMLFIGLNMFTMTL. Residues 1639 to 1649 lie on the Extracellular side of the membrane; sequence DRYDASDTYNA. Residues 1650 to 1673 form a helical membrane-spanning segment; that stretch reads VLDYLNAIFVVIFSSECLLKIFAL. Residues 1674-1679 are Cytoplasmic-facing; sequence RYHYFI. A helical transmembrane segment spans residues 1680 to 1703; sequence EPWNLFDVVVVILSILGLVLSDII. At 1704 to 1713 the chain is on the extracellular side; the sequence is EKYFVSPTLL. Residues 1714-1735 form a helical; Voltage-sensor membrane-spanning segment; sequence RVVRVAKVGRVLRLVKGAKGIR. At 1736-1750 the chain is on the cytoplasmic side; that stretch reads TLLFALAMSLPALFN. A helical transmembrane segment spans residues 1751–1773; it reads ICLLLFLVMFIFAIFGMSFFMHV. Residues 1774-1787 are Extracellular-facing; the sequence is KEKSGINDVYNFKT. An intramembrane region (pore-forming) is located at residues 1788–1810; the sequence is FGQSMILLFQMSTSAGWDGVLDA. Over 1811 to 1835 the chain is Extracellular; that stretch reads IINEEACDPPDNDKGYPGNCGSATV. A helical membrane pass occupies residues 1836 to 1860; it reads GITFLLSYLVISFLIVINMYIAVIL. Residues 1861 to 2131 are Cytoplasmic-facing; that stretch reads ENYSQATEDV…PSITSRTADV (271 aa). The 36-residue stretch at 1877–1912 folds into the EF-hand domain; it reads DDYDMYYEIWQQFDPEGTQYIRYDQLSEFLDVLEPP. Positions 2001 to 2096 are disordered; that stretch reads HKARGEGGGS…GSPGAGSAGR (96 aa). Acidic residues predominate over residues 2021 to 2035; that stretch reads GDPDAGDPAPDEATD. The segment covering 2068–2088 has biased composition (low complexity); that stretch reads AAAAAAAAAAAAAAGTTTAGS.

This sequence belongs to the sodium channel (TC 1.A.1.10) family. Para subfamily.

It localises to the cell membrane. Functionally, mediates the voltage-dependent sodium ion permeability of excitable membranes. Assuming opened or closed conformations in response to the voltage difference across the membrane, the protein forms a sodium-selective channel through which Na(+) ions may pass in accordance with their electrochemical gradient. This is Sodium channel protein para (para) from Drosophila melanogaster (Fruit fly).